An 82-amino-acid chain; its full sequence is MMNLSPPFKSPSGSSRAGRRNQLCCRRFRVPGKPLRNSTLKFFLLIRHTGCSRSRSFLEKAIVLSCPSAGLRSKGFSHEECR.

Residues 1-20 form a disordered region; it reads MMNLSPPFKSPSGSSRAGRR.

This is an uncharacterized protein from Archaeoglobus fulgidus (strain ATCC 49558 / DSM 4304 / JCM 9628 / NBRC 100126 / VC-16).